Reading from the N-terminus, the 317-residue chain is Transcription factor MYB35 (317 aa).

HTH myb-type domains lie at 9 to 65 (KSNV…RPDL) and 66 to 116 (KHDS…KKKL). 2 consecutive DNA-binding regions (H-T-H motif) follow at residues 37–61 (WSLIPKKAGLNRCGKSCRLRWTNYL) and 89–112 (WSSIARKLPGRTDNDVKNHWNTKL).

In terms of tissue distribution, inflorescences-specific. Accumulates in anthers, especially in tapetum and meiocytes/microsporocytes and microspores during anther development.

It is found in the nucleus. Its function is as follows. Required for anther development and early tapetal function during microspore maturation. Regulates callose dissolution required for microspores release from the tetrads. The protein is Transcription factor MYB35 of Arabidopsis thaliana (Mouse-ear cress).